Consider the following 381-residue polypeptide: S-adenosylmethionine synthase (381 aa).

His15 contributes to the ATP binding site. Asp17 lines the Mg(2+) pocket. Glu43 provides a ligand contact to K(+). The L-methionine site is built by Glu56 and Gln99. Residues 99–109 (QSPDINQGVDR) are flexible loop. Residues 164–166 (DAK), 230–231 (RF), Asp239, 245–246 (RK), Ala262, and Lys266 contribute to the ATP site. Asp239 is an L-methionine binding site. Lys270 lines the L-methionine pocket.

It belongs to the AdoMet synthase family. Homotetramer; dimer of dimers. Requires Mg(2+) as cofactor. K(+) serves as cofactor.

It localises to the cytoplasm. It carries out the reaction L-methionine + ATP + H2O = S-adenosyl-L-methionine + phosphate + diphosphate. The protein operates within amino-acid biosynthesis; S-adenosyl-L-methionine biosynthesis; S-adenosyl-L-methionine from L-methionine: step 1/1. Its function is as follows. Catalyzes the formation of S-adenosylmethionine (AdoMet) from methionine and ATP. The overall synthetic reaction is composed of two sequential steps, AdoMet formation and the subsequent tripolyphosphate hydrolysis which occurs prior to release of AdoMet from the enzyme. The sequence is that of S-adenosylmethionine synthase from Alteromonas mediterranea (strain DSM 17117 / CIP 110805 / LMG 28347 / Deep ecotype).